Here is a 249-residue protein sequence, read N- to C-terminus: Serine 3-dehydrogenase (249 aa).

Position 6-30 (6-30) interacts with NADP(+); that stretch reads LITGATSGFGQATAQRFVKEGWKVI. Ser135 is a binding site for substrate. Tyr148 functions as the Proton acceptor in the catalytic mechanism.

It belongs to the short-chain dehydrogenases/reductases (SDR) family. As to quaternary structure, homotetramer.

It catalyses the reaction L-serine + NADP(+) = aminoacetaldehyde + CO2 + NADPH. In terms of biological role, catalyzes the oxidation of the hydroxyl group of serine to form 2-aminomalonate semialdehyde which is spontaneously converted into 2-aminoacetaldehyde and CO(2). Also acts on D-serine, L-glycerate, D-glycerate and 2-methyl-DL-serine. Does not act on O-methyl-DL-serine and L-threonine. The protein is Serine 3-dehydrogenase (sdh) of Rhizobium radiobacter (Agrobacterium tumefaciens).